Consider the following 100-residue polypeptide: Small ribosomal subunit protein uS14c (100 aa).

It belongs to the universal ribosomal protein uS14 family. As to quaternary structure, part of the 30S ribosomal subunit.

It is found in the plastid. The protein localises to the chloroplast. Binds 16S rRNA, required for the assembly of 30S particles. This Lobularia maritima (Sweet alyssum) protein is Small ribosomal subunit protein uS14c.